Reading from the N-terminus, the 349-residue chain is Transcription initiation factor TFIID subunit 7 (349 aa).

Residues 3-5 (KSK) carry the [KR]-[STA]-K motif motif. The segment at 105–126 (PPVEEPVASTDPKASKKKDKDK) is disordered. Residues Ser-171, Ser-200, Ser-201, and Ser-213 each carry the phosphoserine modification. The tract at residues 186–212 (EDETKEAENQGLDISSPGMSGHRQGHD) is disordered. Positions 227–247 (SSSSEDEDETQHQDEEDINII) are disordered. Over residues 230–247 (SEDEDETQHQDEEDINII) the composition is skewed to acidic residues. Residues 244–349 (INIIDTEEDL…QEELESLLEK (106 aa)) adopt a coiled-coil conformation. Ser-264 carries the phosphoserine modification. The segment at 328 to 349 (KEDREKEQLSSLQEELESLLEK) is disordered.

It belongs to the TAF7 family. As to quaternary structure, component of the TFIID basal transcription factor complex, composed of TATA-box-binding protein TBP, and a number of TBP-associated factors (TAFs), including TAF1, TAF2, TAF3, TAF4, TAF5, TAF6, TAF7, TAF8, TAF9, TAF10, TAF11, TAF12 and TAF13. Part of a TFIID-containing RNA polymerase II pre-initiation complex that is composed of TBP and at least GTF2A1, GTF2A2, GTF2E1, GTF2E2, GTF2F1, GTF2H2, GTF2H3, GTF2H4, GTF2H5, GTF2B, TCEA1, ERCC2, ERCC3, TAF1, TAF2, TAF3, TAF4, TAF5, TAF6, TAF7, TAF8, TAF9, TAF10, TAF11, TAF12 and TAF13. Interacts with TAF1; the interaction is direct. Interacts with TAF1, TAF5, TAF11, TAF12, and TAF13, but not with TAF10 or TBP. Component of some MLL1/MLL complex, at least composed of the core components KMT2A/MLL1, ASH2L, HCFC1/HCF1, WDR5 and RBBP5, as well as the facultative components BACC1, CHD8, E2F6, HSP70, INO80C, KANSL1, LAS1L, MAX, MCRS1, MGA, MYST1/MOF, PELP1, PHF20, PRP31, RING2, RUVB1/TIP49A, RUVB2/TIP49B, SENP3, TAF1, TAF4, TAF6, TAF7, TAF9 and TEX10. Interacts with CIITA and TAF1 and inhibits their acetyltransferase activity, and behaving as a repressor of CIITA- and TAF1-regulated promoters. Phosphorylated by CIITA. Phosphorylation at Ser-264 by TAF1 in early G1 phase disrupts binding to TAF1. In terms of processing, ubiquitinated by TRIM26; leading to proteasomal degradation. As to expression, ubiquitous.

The protein localises to the nucleus. In terms of biological role, the TFIID basal transcription factor complex plays a major role in the initiation of RNA polymerase II (Pol II)-dependent transcription. TFIID recognizes and binds promoters with or without a TATA box via its subunit TBP, a TATA-box-binding protein, and promotes assembly of the pre-initiation complex (PIC). The TFIID complex consists of TBP and TBP-associated factors (TAFs), including TAF1, TAF2, TAF3, TAF4, TAF5, TAF6, TAF7, TAF8, TAF9, TAF10, TAF11, TAF12 and TAF13. TAF7 forms a promoter DNA binding subcomplex of TFIID, together with TAF1 and TAF2. Part of a TFIID complex containing TAF10 (TFIID alpha) and a TFIID complex lacking TAF10 (TFIID beta). The chain is Transcription initiation factor TFIID subunit 7 (TAF7) from Homo sapiens (Human).